The following is a 166-amino-acid chain: Peptidoglycan-associated lipoprotein (166 aa).

Positions 1–21 (MEMLKFGKFAALALAMAVAVG) are cleaved as a signal peptide. A lipid anchor (N-palmitoyl cysteine) is attached at Cys-22. A lipid anchor (S-diacylglycerol cysteine) is attached at Cys-22. The 113-residue stretch at 54 to 166 (SEEAALRAIT…AQNRRVELRK (113 aa)) folds into the OmpA-like domain. The disordered stretch occupies residues 147 to 166 (VATGNDEQSWAQNRRVELRK).

Belongs to the Pal lipoprotein family. As to quaternary structure, the Tol-Pal system is composed of five core proteins: the inner membrane proteins TolA, TolQ and TolR, the periplasmic protein TolB and the outer membrane protein Pal. They form a network linking the inner and outer membranes and the peptidoglycan layer.

It localises to the cell outer membrane. Its function is as follows. Part of the Tol-Pal system, which plays a role in outer membrane invagination during cell division and is important for maintaining outer membrane integrity. This chain is Peptidoglycan-associated lipoprotein, found in Pseudomonas putida (Arthrobacter siderocapsulatus).